The following is a 446-amino-acid chain: Probable E3 ubiquitin-protein ligase XBOS31 (446 aa).

ANK repeat units follow at residues Asp46–Val75, Lys79–Thr108, Arg113–Gly142, Arg160–Ala189, and Pro197–Arg227. An RING-type zinc finger spans residues Cys317 to Arg366. The segment at Thr376–Ser401 is disordered.

The enzyme catalyses S-ubiquitinyl-[E2 ubiquitin-conjugating enzyme]-L-cysteine + [acceptor protein]-L-lysine = [E2 ubiquitin-conjugating enzyme]-L-cysteine + N(6)-ubiquitinyl-[acceptor protein]-L-lysine.. The protein operates within protein modification; protein ubiquitination. The protein is Probable E3 ubiquitin-protein ligase XBOS31 (XBOS31) of Oryza sativa subsp. japonica (Rice).